A 902-amino-acid chain; its full sequence is Protein translocase subunit SecA (902 aa).

ATP contacts are provided by residues Gln-87, 105-109 (GEGKT), and Asp-512. The segment at 836 to 902 (DVEKVEEQHR…KFKQCCGKLK (67 aa)) is disordered. Over residues 840-863 (VEEQHRKSENAPREYQHEEVEHVG) the composition is skewed to basic and acidic residues. Residues Cys-886, Cys-888, Cys-897, and Cys-898 each coordinate Zn(2+).

The protein belongs to the SecA family. In terms of assembly, monomer and homodimer. Part of the essential Sec protein translocation apparatus which comprises SecA, SecYEG and auxiliary proteins SecDF-YajC and YidC. Zn(2+) is required as a cofactor.

It is found in the cell inner membrane. The protein resides in the cytoplasm. It catalyses the reaction ATP + H2O + cellular proteinSide 1 = ADP + phosphate + cellular proteinSide 2.. Its function is as follows. Part of the Sec protein translocase complex. Interacts with the SecYEG preprotein conducting channel. Has a central role in coupling the hydrolysis of ATP to the transfer of proteins into and across the cell membrane, serving both as a receptor for the preprotein-SecB complex and as an ATP-driven molecular motor driving the stepwise translocation of polypeptide chains across the membrane. This Pseudoalteromonas translucida (strain TAC 125) protein is Protein translocase subunit SecA.